The sequence spans 340 residues: DnaJ homolog subfamily B member 1 (340 aa).

The 69-residue stretch at 2 to 70 folds into the J domain; it reads GKDYYQTLGL…REIFDRYGEE (69 aa). Phosphothreonine is present on Thr307.

As to quaternary structure, interacts with DNAJC3. Interacts with HSF1 (via transactivation domain); this interaction results in the inhibition of heat shock- and HSF1-induced transcriptional activity during the attenuation and recovery phase period of the heat shock response. Interacts with BAG3.

Its subcellular location is the cytoplasm. The protein localises to the nucleus. It localises to the nucleolus. Its function is as follows. Interacts with HSP70 and can stimulate its ATPase activity. Stimulates the association between HSC70 and HIP. Negatively regulates heat shock-induced HSF1 transcriptional activity during the attenuation and recovery phase period of the heat shock response. Stimulates ATP hydrolysis and the folding of unfolded proteins mediated by HSPA1A/B (in vitro). In Homo sapiens (Human), this protein is DnaJ homolog subfamily B member 1 (DNAJB1).